We begin with the raw amino-acid sequence, 506 residues long: 2-isopropylmalate synthase (506 aa).

The Pyruvate carboxyltransferase domain occupies 4–266 (ILFMDTTLRD…EPSITLKEIK (263 aa)). Residues Asp-13, His-201, His-203, and Asn-237 each coordinate Mn(2+). The segment at 390–506 (NITQLQVHFV…KLKSFIQLVK (117 aa)) is regulatory domain.

It belongs to the alpha-IPM synthase/homocitrate synthase family. LeuA type 1 subfamily. In terms of assembly, homodimer. It depends on Mn(2+) as a cofactor.

It localises to the cytoplasm. The enzyme catalyses 3-methyl-2-oxobutanoate + acetyl-CoA + H2O = (2S)-2-isopropylmalate + CoA + H(+). It participates in amino-acid biosynthesis; L-leucine biosynthesis; L-leucine from 3-methyl-2-oxobutanoate: step 1/4. Functionally, catalyzes the condensation of the acetyl group of acetyl-CoA with 3-methyl-2-oxobutanoate (2-ketoisovalerate) to form 3-carboxy-3-hydroxy-4-methylpentanoate (2-isopropylmalate). The sequence is that of 2-isopropylmalate synthase from Bacillus thuringiensis subsp. konkukian (strain 97-27).